Reading from the N-terminus, the 404-residue chain is Odorant receptor 74a (404 aa).

Residues 1–38 lie on the Cytoplasmic side of the membrane; sequence MSFHRYRPRLPGGELAPMPWPVSLYRVLNHVAWPLEAE. The helical transmembrane segment at 39-59 threads the bilayer; it reads SGRWTVFLDRLMIFLGFLVFC. Residues 60–67 are Extracellular-facing; that stretch reads EHNEVDFH. The helical transmembrane segment at 68 to 88 threads the bilayer; sequence YLIANRQDMDNMLTGLPTYLI. Residues 89 to 141 lie on the Cytoplasmic side of the membrane; sequence LVEMQIRCFQLAWHKDRFRALLQRFYAEIYVSEEMEPHLFASIQRQMLATRVN. A helical membrane pass occupies residues 142–162; that stretch reads STVYLLALLNFFLVPVTNVIY. The Extracellular segment spans residues 163–181; sequence HRREMLYKQVYPFDNTQLH. The helical transmembrane segment at 182–202 threads the bilayer; the sequence is FFIPLLVLNFWVGFIITSMLF. Topologically, residues 203 to 274 are cytoplasmic; that stretch reads GELNVMGELM…QRVEKEFTLR (72 aa). A helical membrane pass occupies residues 275-295; sequence IFVMFAFSAGLLCALFFKAFT. The Extracellular portion of the chain corresponds to 296 to 303; it reads NPWGNVAY. Residues 304–324 traverse the membrane as a helical segment; that stretch reads IVWFLAKFMELLALGMLGSIL. Residues 325 to 380 lie on the Cytoplasmic side of the membrane; that stretch reads LKTTDELGMMYYTADWEQVIHQSDNVGENVKLMKLVTLAIQLNSRPFFITGLNYFR. Residues 381-401 traverse the membrane as a helical segment; sequence VSLTAVLKIIQGAFSYFTFLN. Topologically, residues 402 to 404 are extracellular; it reads SMR.

The protein belongs to the insect chemoreceptor superfamily. Heteromeric odorant receptor channel (TC 1.A.69) family. Or1a subfamily. As to quaternary structure, interacts with Orco. Complexes exist early in the endomembrane system in olfactory sensory neurons (OSNs), coupling these complexes to the conserved ciliary trafficking pathway.

The protein resides in the cell membrane. Odorant receptor which mediates acceptance or avoidance behavior, depending on its substrates. The odorant receptor repertoire encodes a large collection of odor stimuli that vary widely in identity, intensity, and duration. May form a complex with Orco to form odorant-sensing units, providing sensitive and prolonged odorant signaling and calcium permeability. Involved in the behavioral responses to octanol, anisole, and 2-heptanone. The polypeptide is Odorant receptor 74a (Or74a) (Drosophila melanogaster (Fruit fly)).